The sequence spans 311 residues: Probable cobalamin biosynthesis protein CobD (311 aa).

The next 4 helical transmembrane spans lie at 53–73 (FIFGTLTTISVLFIVFGAIYG), 76–96 (ILINNIQNIYIKYIVYSFLIS), 157–177 (DSIIAPLFYAIFFGLEGAFIY), and 288–308 (FSIDVVIFSFIVLYSIYYVIF).

It belongs to the CobD/CbiB family.

It localises to the cell membrane. The protein operates within cofactor biosynthesis; adenosylcobalamin biosynthesis. In terms of biological role, converts cobyric acid to cobinamide by the addition of aminopropanol on the F carboxylic group. This Methanococcus aeolicus (strain ATCC BAA-1280 / DSM 17508 / OCM 812 / Nankai-3) protein is Probable cobalamin biosynthesis protein CobD.